We begin with the raw amino-acid sequence, 424 residues long: Histone-binding protein RBBP7 (424 aa).

WD repeat units lie at residues 47 to 121, 127 to 172, 180 to 216, 227 to 268, 274 to 311, 317 to 368, and 375 to 402; these read QWLP…KINH, RARY…LRLR, GLSWNSNLKGHLLSASDDHTVCLWDISAGPKEGKIVD, VVED…HSVD, VNCLSFNPYSEFILATGSADKTVALWDLRNLKLKLHSF, EIFQ…LFIH, and ISDFSWNPNEPWVICSVSEDNIMQIWQM. An interaction with HAT1 region spans residues 359–404; the sequence is DGPPELLFIHGGHTAKISDFSWNPNEPWVICSVSEDNIMQIWQMAE.

This sequence belongs to the WD repeat RBAP46/RBAP48/MSI1 family. In terms of assembly, binds directly to helix 1 of the histone fold of histone H4, a region that is not accessible when H4 is in chromatin. Also interacts with histone H2B and HAT1.

The protein localises to the nucleus. Core histone-binding subunit that may target chromatin remodeling factors, histone acetyltransferases and histone deacetylases to their histone substrates in a manner that is regulated by nucleosomal DNA. Component of several complexes which regulate chromatin metabolism. This is Histone-binding protein RBBP7 (RBBP7) from Gallus gallus (Chicken).